The primary structure comprises 399 residues: Probable inactive 2-oxoglutarate-dependent dioxygenase AOP2 (399 aa).

Residues 248–345 (GGDDVEANDD…RYTAAIFTCP (98 aa)) enclose the Fe2OG dioxygenase domain. Residues His268, Asp270, and His325 each contribute to the Fe cation site. Position 336 (Arg336) interacts with 2-oxoglutarate.

This sequence belongs to the iron/ascorbate-dependent oxidoreductase family. Fe(2+) is required as a cofactor.

This is Probable inactive 2-oxoglutarate-dependent dioxygenase AOP2 (AOP2) from Arabidopsis thaliana (Mouse-ear cress).